The following is a 228-amino-acid chain: Transcription repressor OFP8 (228 aa).

Low complexity-rich tracts occupy residues 1 to 14 (MSGR…FSLR), 54 to 79 (ASST…TDSS), and 92 to 101 (EEPAAAQQEQ). Disordered stretches follow at residues 1–21 (MSGR…VVDI) and 36–143 (SSSS…QLQE). Positions 107 to 120 (RRRRRQQRRRRRRA) are enriched in basic residues. Positions 157 to 216 (VAVESAEPYEDFRESMVQMVVEKEIYAWDDLNDLLHQFLSLNSPRHHPLILHAFADLWTR) constitute an OVATE domain.

As to quaternary structure, interacts with GSK2. In terms of processing, phosphorylated on serine and threonine residues by GSK2. Dephosphorylated during response to brassinosteroid. In terms of tissue distribution, expressed in roots, stems, stem nodes, young leaves, leaf sheaths, lamina joints, young spikelets, inflorescences, stamens and ovaries, embryos and seeds.

The protein localises to the nucleus. It is found in the cytoplasm. Probable transcriptional repressor that regulates multiple aspects of plant growth and development, partly through brassinosteroid (BR) signaling pathway. Acts downstream of the kinase GSK2, a negative regulator of BR signaling. The polypeptide is Transcription repressor OFP8 (Oryza sativa subsp. japonica (Rice)).